Reading from the N-terminus, the 264-residue chain is Phosphonates import ATP-binding protein PhnC (264 aa).

One can recognise an ABC transporter domain in the interval 8–255 (LQAENLRMTF…KLIEIYGPEF (248 aa)). Residue 40-47 (GPSGSGKS) participates in ATP binding.

The protein belongs to the ABC transporter superfamily. Phosphonates importer (TC 3.A.1.9.1) family. As to quaternary structure, the complex is composed of two ATP-binding proteins (PhnC), two transmembrane proteins (PhnE) and a solute-binding protein (PhnD).

It localises to the cell inner membrane. It carries out the reaction phosphonate(out) + ATP + H2O = phosphonate(in) + ADP + phosphate + H(+). Functionally, part of the ABC transporter complex PhnCDE involved in phosphonates import. Responsible for energy coupling to the transport system. The sequence is that of Phosphonates import ATP-binding protein PhnC from Maricaulis maris (strain MCS10) (Caulobacter maris).